The chain runs to 799 residues: Protein translocase subunit SecA (799 aa).

ATP-binding positions include Gln85, 103–107, and Asp504; that span reads GEGKT.

Belongs to the SecA family. Monomer and homodimer. Part of the essential Sec protein translocation apparatus which comprises SecA, SecYEG and auxiliary proteins SecDF. Other proteins may also be involved.

The protein resides in the cell membrane. Its subcellular location is the cytoplasm. It carries out the reaction ATP + H2O + cellular proteinSide 1 = ADP + phosphate + cellular proteinSide 2.. In terms of biological role, part of the Sec protein translocase complex. Interacts with the SecYEG preprotein conducting channel. Has a central role in coupling the hydrolysis of ATP to the transfer of proteins into and across the cell membrane, serving as an ATP-driven molecular motor driving the stepwise translocation of polypeptide chains across the membrane. This chain is Protein translocase subunit SecA, found in Lactobacillus gasseri (strain ATCC 33323 / DSM 20243 / BCRC 14619 / CIP 102991 / JCM 1131 / KCTC 3163 / NCIMB 11718 / NCTC 13722 / AM63).